The sequence spans 43 residues: Alpha-1-antiproteinase 4 (43 aa).

Belongs to the serpin family. Post-translationally, N-glycosylated with carbohydrates having biantennary side chains. In terms of tissue distribution, plasma.

It localises to the secreted. The protein is Alpha-1-antiproteinase 4 of Equus caballus (Horse).